The chain runs to 295 residues: F-box only protein 6 (295 aa).

Residues 1–48 (MVHINELPENILLELFIHIPAPQLLRNCRLVCRLWRDLIDVVSLWKRK) form the F-box domain. The 182-residue stretch at 69 to 250 (FYILCSLQRN…VTNSSIIISH (182 aa)) folds into the FBA domain. Phosphoserine occurs at positions 249 and 276. Phosphothreonine is present on Thr-280.

Interacts with CHEK1 and CUL1. Part of a SCF (SKP1-cullin-F-box) protein ligase complex. Interacts with VCP. As to expression, present in liver and kidney (at protein level). Widely expressed.

It is found in the cytoplasm. The protein operates within protein modification; protein ubiquitination. Functionally, substrate-recognition component of some SCF (SKP1-CUL1-F-box protein)-type E3 ubiquitin ligase complexes. Involved in DNA damage response by specifically recognizing activated CHEK1 (phosphorylated on 'Ser-345'), promoting its ubiquitination and degradation. Ubiquitination of CHEK1 is required to ensure that activated CHEK1 does not accumulate as cells progress through S phase, or when replication forks encounter transient impediments during normal DNA replication. Involved in endoplasmic reticulum-associated degradation pathway (ERAD) for misfolded lumenal proteins by recognizing and binding sugar chains on unfolded glycoproteins that are retrotranslocated into the cytosol and promoting their ubiquitination and subsequent degradation. Able to recognize and bind denatured glycoproteins, which are modified with not only high-mannose but also complex-type oligosaccharides. Also recognizes sulfated glycans. The chain is F-box only protein 6 (Fbxo6) from Mus musculus (Mouse).